The chain runs to 452 residues: Low-affinity putrescine importer PlaP (452 aa).

At M1–K16 the chain is on the cytoplasmic side. A helical transmembrane segment spans residues T17 to F37. The Periplasmic segment spans residues D38–D48. The helical transmembrane segment at G49–Y69 threads the bilayer. The Cytoplasmic segment spans residues G70 to G95. Residues F96–L116 form a helical membrane-spanning segment. The Periplasmic segment spans residues A117 to A123. A helical transmembrane segment spans residues L124–F144. Residues N145 to V158 lie on the Cytoplasmic side of the membrane. The helical transmembrane segment at I159–F179 threads the bilayer. Topologically, residues E180–H199 are periplasmic. The chain crosses the membrane as a helical span at residues V200 to I220. Residues S221–A237 are Cytoplasmic-facing. Residues I238 to L258 traverse the membrane as a helical segment. Topologically, residues Y259 to K283 are periplasmic. A helical membrane pass occupies residues A284–A304. Over H305 to N339 the chain is Cytoplasmic. 2 helical membrane passes run I340–A360 and L361–F381. At W382–H394 the chain is on the cytoplasmic side. Residues F395–L415 traverse the membrane as a helical segment. The Periplasmic segment spans residues E416–E417. A helical transmembrane segment spans residues S418 to T438. The Cytoplasmic portion of the chain corresponds to K439–A452.

Belongs to the amino acid-polyamine-organocation (APC) superfamily.

Its subcellular location is the cell inner membrane. The catalysed reaction is putrescine(in) + H(+)(in) = putrescine(out) + H(+)(out). Putrescine importer. This chain is Low-affinity putrescine importer PlaP (plaP), found in Escherichia coli O157:H7.